A 279-amino-acid polypeptide reads, in one-letter code: Fructose-1,6-bisphosphatase class 1 (279 aa).

Positions 65, 85, 87, and 88 each coordinate Mg(2+). Substrate-binding positions include 88 to 91, tyrosine 190, and lysine 221; that span reads DGSS. Mg(2+) is bound at residue glutamate 227.

Belongs to the FBPase class 1 family. As to quaternary structure, homotetramer. It depends on Mg(2+) as a cofactor.

The protein localises to the cytoplasm. The enzyme catalyses beta-D-fructose 1,6-bisphosphate + H2O = beta-D-fructose 6-phosphate + phosphate. It functions in the pathway carbohydrate biosynthesis; gluconeogenesis. This chain is Fructose-1,6-bisphosphatase class 1, found in Helicobacter hepaticus (strain ATCC 51449 / 3B1).